We begin with the raw amino-acid sequence, 460 residues long: Argininosuccinate lyase (460 aa).

Belongs to the lyase 1 family. Argininosuccinate lyase subfamily.

The protein resides in the cytoplasm. The enzyme catalyses 2-(N(omega)-L-arginino)succinate = fumarate + L-arginine. The protein operates within amino-acid biosynthesis; L-arginine biosynthesis; L-arginine from L-ornithine and carbamoyl phosphate: step 3/3. This is Argininosuccinate lyase from Alkaliphilus metalliredigens (strain QYMF).